Reading from the N-terminus, the 196-residue chain is RNA pyrophosphohydrolase (196 aa).

Residues 6-149 (GYRPNVGIVI…KRDVYRKVMK (144 aa)) enclose the Nudix hydrolase domain. Residues 38-59 (GGINDNESAEQAMYRELHEEVG) carry the Nudix box motif.

This sequence belongs to the Nudix hydrolase family. RppH subfamily. A divalent metal cation serves as cofactor.

Accelerates the degradation of transcripts by removing pyrophosphate from the 5'-end of triphosphorylated RNA, leading to a more labile monophosphorylated state that can stimulate subsequent ribonuclease cleavage. This is RNA pyrophosphohydrolase from Haemophilus influenzae (strain PittEE).